A 350-amino-acid polypeptide reads, in one-letter code: Probable poly-beta-1,6-N-acetyl-D-glucosamine export protein (350 aa).

10 helical membrane-spanning segments follow: residues 7-29, 44-66, 79-101, 116-138, 145-167, 187-204, 211-233, 243-262, 269-291, and 306-328; these read ELVY…TQIT, FYIR…LLTT, TRVK…SESL, LLGQ…SYII, LFNS…YYFT, IIFG…MGYN, FLER…FIAL, SFSY…ILGI, MLFN…HPII, and TMVF…GMIL.

Belongs to the acyltransferase 3 family.

It localises to the cell membrane. In terms of biological role, presumably involved in the export of the biofilm adhesin polysaccharide poly-beta-1,6-N-acetyl-D-glucosamine (PNAG, also referred to as PIA) across the cell membrane. In Staphylococcus aureus (strain MRSA252), this protein is Probable poly-beta-1,6-N-acetyl-D-glucosamine export protein (icaC).